A 385-amino-acid chain; its full sequence is Flap endonuclease 1 (385 aa).

Positions 1–104 are N-domain; it reads MGILGLSKLI…GELAKRAERR (104 aa). Asp-34 contacts Mg(2+). Arg-47 and Arg-70 together coordinate DNA. Mg(2+) is bound by residues Asp-86, Glu-158, Glu-160, Asp-179, and Asp-181. Positions 122-253 are I-domain; that stretch reads GIEKFNRRLV…KRAIELINTY (132 aa). Glu-158 is a binding site for DNA. 2 residues coordinate DNA: Gly-231 and Asp-233. Asp-233 serves as a coordination point for Mg(2+). Positions 336 to 344 are interaction with PCNA; the sequence is TQVRLDSFF. Residues 346–385 are disordered; sequence TLPSTPNATNAAKRKAEEAKKSANNKKAKTSGGGRGRRPK. Residues 368-385 show a composition bias toward basic residues; sequence ANNKKAKTSGGGRGRRPK.

The protein belongs to the XPG/RAD2 endonuclease family. FEN1 subfamily. As to quaternary structure, interacts with PCNA. Three molecules of FEN1 bind to one PCNA trimer with each molecule binding to one PCNA monomer. PCNA stimulates the nuclease activity without altering cleavage specificity. It depends on Mg(2+) as a cofactor. Phosphorylated. Phosphorylation upon DNA damage induces relocalization to the nuclear plasma.

Its subcellular location is the nucleus. It localises to the nucleolus. It is found in the nucleoplasm. The protein localises to the mitochondrion. Its function is as follows. Structure-specific nuclease with 5'-flap endonuclease and 5'-3' exonuclease activities involved in DNA replication and repair. During DNA replication, cleaves the 5'-overhanging flap structure that is generated by displacement synthesis when DNA polymerase encounters the 5'-end of a downstream Okazaki fragment. It enters the flap from the 5'-end and then tracks to cleave the flap base, leaving a nick for ligation. Also involved in the long patch base excision repair (LP-BER) pathway, by cleaving within the apurinic/apyrimidinic (AP) site-terminated flap. Acts as a genome stabilization factor that prevents flaps from equilibrating into structures that lead to duplications and deletions. Also possesses 5'-3' exonuclease activity on nicked or gapped double-stranded DNA, and exhibits RNase H activity. Also involved in replication and repair of rDNA and in repairing mitochondrial DNA. This Drosophila melanogaster (Fruit fly) protein is Flap endonuclease 1.